Consider the following 199-residue polypeptide: ATP synthase subunit a (199 aa).

5 helical membrane-spanning segments follow: residues 2–22 (NQVY…LFYF), 53–73 (VISV…YFTY), 80–100 (MVEF…LTFI), 141–161 (LTVN…GLEL), and 169–189 (WLSI…SYIF).

Belongs to the ATPase A chain family. F-type ATPases have 2 components, CF(1) - the catalytic core - and CF(0) - the membrane proton channel. CF(1) has five subunits: alpha(3), beta(3), gamma(1), delta(1), epsilon(1). CF(0) has three main subunits: a, b and c.

It localises to the mitochondrion inner membrane. Its function is as follows. Mitochondrial membrane ATP synthase (F(1)F(0) ATP synthase or Complex V) produces ATP from ADP in the presence of a proton gradient across the membrane which is generated by electron transport complexes of the respiratory chain. F-type ATPases consist of two structural domains, F(1) - containing the extramembraneous catalytic core and F(0) - containing the membrane proton channel, linked together by a central stalk and a peripheral stalk. During catalysis, ATP synthesis in the catalytic domain of F(1) is coupled via a rotary mechanism of the central stalk subunits to proton translocation. Key component of the proton channel; it may play a direct role in the translocation of protons across the membrane. This Caenorhabditis briggsae protein is ATP synthase subunit a (atp6).